The primary structure comprises 165 residues: 6,7-dimethyl-8-ribityllumazine synthase (165 aa).

5-amino-6-(D-ribitylamino)uracil-binding positions include Phe-22, 56–58 (SME), and 80–82 (AVI). 85 to 86 (ET) serves as a coordination point for (2S)-2-hydroxy-3-oxobutyl phosphate. Catalysis depends on His-88, which acts as the Proton donor. Phe-113 lines the 5-amino-6-(D-ribitylamino)uracil pocket. Residue Arg-127 participates in (2S)-2-hydroxy-3-oxobutyl phosphate binding.

Belongs to the DMRL synthase family.

The enzyme catalyses (2S)-2-hydroxy-3-oxobutyl phosphate + 5-amino-6-(D-ribitylamino)uracil = 6,7-dimethyl-8-(1-D-ribityl)lumazine + phosphate + 2 H2O + H(+). It participates in cofactor biosynthesis; riboflavin biosynthesis; riboflavin from 2-hydroxy-3-oxobutyl phosphate and 5-amino-6-(D-ribitylamino)uracil: step 1/2. Its function is as follows. Catalyzes the formation of 6,7-dimethyl-8-ribityllumazine by condensation of 5-amino-6-(D-ribitylamino)uracil with 3,4-dihydroxy-2-butanone 4-phosphate. This is the penultimate step in the biosynthesis of riboflavin. The protein is 6,7-dimethyl-8-ribityllumazine synthase of Thermotoga sp. (strain RQ2).